Reading from the N-terminus, the 341-residue chain is MFVDKTLMITGGTGSFGNAVLSRFLKSNIINDIKEIRIFSRDEKKQEDMRIALNNSKLKFYIGDVRNYQSIDDAMHGVDYVFHAAALKQVPTCEFYPMEAINTNVLGAENVLSAAINNKVTKVIVLSTDKAVYPINAMGLSKALMEKLAIAKARMRSPGETILCVTRYGNVMASRGSVIPLFIHQIKQGKELTITEPSMTRFLMSLVDSVDLVLYAFEHGRQGDIFVQKSPASTIEVLAKALQEIFGSKNAIRFIGTRHGEKHYESLVSSEDMAKADDLGGYYRIPMDGRDLNYAKYFVTGEKKVALLDDYTSHNTKRLNLKEVKELLLTLDYVQKELKNA.

The protein belongs to the polysaccharide synthase family.

The catalysed reaction is UDP-alpha-D-glucose = UDP-alpha-D-galactose. Epimerizes UDP-galactose to UDP-glucose. May contribute to formation of LPS or the exopolysaccharide slime layer by providing UDP-galactose as a substrate for either molecule. This Rickettsia prowazekii (strain Madrid E) protein is UDP-glucose 4-epimerase (capD).